Consider the following 983-residue polypeptide: Pro-apoptotic serine protease NMA111 (983 aa).

Positions 1–40 (MSVPTKRRLSFDESTNKRFLNGTHSTENNTSNIEVDEDYG) are disordered. Polar residues predominate over residues 22-33 (GTHSTENNTSNI). The tract at residues 59–260 (WQETITKVVN…LPIYRPLRAL (202 aa)) is serine protease. Active-site charge relay system residues include His108, Asp139, and Ser222. PDZ domains follow at residues 287 to 365 (RRLG…QRGG) and 867 to 948 (FWSG…MSFD).

This sequence belongs to the peptidase S1C family.

It localises to the nucleus. In terms of biological role, nuclear serine protease which mediates apoptosis. This is Pro-apoptotic serine protease NMA111 (NMA111) from Scheffersomyces stipitis (strain ATCC 58785 / CBS 6054 / NBRC 10063 / NRRL Y-11545) (Yeast).